A 322-amino-acid chain; its full sequence is Tetraacyldisaccharide 4'-kinase (322 aa).

54–61 (SVGGTGKT) contributes to the ATP binding site.

This sequence belongs to the LpxK family.

It catalyses the reaction a lipid A disaccharide + ATP = a lipid IVA + ADP + H(+). It functions in the pathway glycolipid biosynthesis; lipid IV(A) biosynthesis; lipid IV(A) from (3R)-3-hydroxytetradecanoyl-[acyl-carrier-protein] and UDP-N-acetyl-alpha-D-glucosamine: step 6/6. Transfers the gamma-phosphate of ATP to the 4'-position of a tetraacyldisaccharide 1-phosphate intermediate (termed DS-1-P) to form tetraacyldisaccharide 1,4'-bis-phosphate (lipid IVA). This Francisella tularensis subsp. tularensis (strain FSC 198) protein is Tetraacyldisaccharide 4'-kinase.